Here is a 23-residue protein sequence, read N- to C-terminus: Ocellatin-LB2 (23 aa).

Asparagine amide is present on N23.

Expressed by the skin glands.

The protein localises to the secreted. In terms of biological role, antibacterial peptide that inhibits the Gram-negative bacterium A.actinomycetemcomitans ATCC 29522 (MIC=210 uM). No activity against the bacteria E.coli ATCC 25922 and S.aureus ATCC 25923, or the fungi C.albicans ATCC 18804 and C.lusitaniae ATCC 56936. Does not show hemolytic activity towards rabbit erythrocytes. This Leptodactylus labyrinthicus (Labyrinth frog) protein is Ocellatin-LB2.